The chain runs to 977 residues: Serine/threonine-protein kinase N2 (977 aa).

REM-1 domains are found at residues 24 to 100 (NLDF…HIVV), 114 to 194 (DTPK…TSEI), and 200 to 280 (DVTT…ELPK). A C2 domain is found at 298–468 (PPNSPRQSIM…LYLEPQGTLF (171 aa)). Disordered stretches follow at residues 342 to 381 (GRSKTASVSLPGWSPSEARSSFMSRGNKNKSGSSRTLSKS) and 531 to 576 (AADL…KRNS). The segment covering 358–378 (EARSSFMSRGNKNKSGSSRTL) has biased composition (polar residues). The Protein kinase domain maps to 650 to 909 (FKCVAVLGRG…AEEVKRHPFF (260 aa)). Residues 656-664 (LGRGHFGKV) and lysine 679 each bind ATP. The Proton acceptor role is filled by aspartate 775. One can recognise an AGC-kinase C-terminal domain in the interval 910–977 (RDMDWPGLLA…ADFDYIADWC (68 aa)).

This sequence belongs to the protein kinase superfamily. AGC Ser/Thr protein kinase family. PKC subfamily. Post-translationally, autophosphorylated. Phosphorylated. In terms of processing, proteolytically cleaved.

It localises to the cytoplasm. Its subcellular location is the nucleus. The protein localises to the membrane. It is found in the cell projection. The protein resides in the lamellipodium. It localises to the cytoskeleton. Its subcellular location is the cleavage furrow. The protein localises to the midbody. It is found in the cell junction. It catalyses the reaction L-seryl-[protein] + ATP = O-phospho-L-seryl-[protein] + ADP + H(+). The enzyme catalyses L-threonyl-[protein] + ATP = O-phospho-L-threonyl-[protein] + ADP + H(+). Kinase activity is activated upon binding to GTP-bound Rho/Rac GTPases. Activated by lipids, particularly cardiolipin and to a lesser extent by other acidic phospholipids and unsaturated fatty acids. Two specific sites, Thr-809 (activation loop of the kinase domain) and Thr-951 (turn motif), may be needed to be phosphorylated for its full activation. Functionally, pkc-related serine/threonine-protein kinase and Rho/Rac effector protein that participates in specific signal transduction responses in the cell. May play a role in the regulation of cell cycle progression, actin cytoskeleton assembly, cell migration, cell adhesion and transcription activation signaling processes. The polypeptide is Serine/threonine-protein kinase N2 (pkn2) (Danio rerio (Zebrafish)).